A 559-amino-acid chain; its full sequence is 5'-AMP-activated protein kinase catalytic subunit alpha-1 (559 aa).

One can recognise a Protein kinase domain in the interval 27–279; that stretch reads YILGDTLGVG…IKDIREHEWF (253 aa). At threonine 32 the chain carries Phosphothreonine. ATP-binding positions include 33–41 and lysine 56; that span reads LGVGTFGKV. Aspartate 150 serves as the catalytic Proton acceptor. Threonine 183 is modified (phosphothreonine; by LKB1 and CaMKK2). Threonine 269 and threonine 355 each carry phosphothreonine. Residues 302-381 form an AIS region; that stretch reads EALKEVCEKF…PERVPFLVAE (80 aa). Serine 356 bears the Phosphoserine mark. Phosphoserine; by ULK1 is present on serine 360. Threonine 368 is modified (phosphothreonine; by ULK1). The residue at position 382 (threonine 382) is a Phosphothreonine. A phosphoserine mark is found at serine 397, serine 467, and serine 486. Residues 485–505 are compositionally biased toward polar residues; the sequence is KSGTATPQRSGSVSNYRSCQR. Residues 485-536 form a disordered region; that stretch reads KSGTATPQRSGSVSNYRSCQRSDSDAEAQGKSSEVSLTSSVTSLDSSPVDLT. Phosphothreonine is present on residues threonine 488 and threonine 490. Serine 496, serine 508, serine 524, and serine 527 each carry phosphoserine. Positions 516–535 are enriched in low complexity; the sequence is SSEVSLTSSVTSLDSSPVDL.

Belongs to the protein kinase superfamily. CAMK Ser/Thr protein kinase family. SNF1 subfamily. In terms of assembly, AMPK is a heterotrimer of an alpha catalytic subunit (PRKAA1 or PRKAA2), a beta (PRKAB1 or PRKAB2) and a gamma non-catalytic subunits (PRKAG1, PRKAG2 or PRKAG3). Interacts with FNIP1 and FNIP2. (Microbial infection) Interacts with Dengue type 2 virus non-structural protein 1; this interaction promotes the AMPK/ERK/mTOR signaling pathway to induce autophagy. Mg(2+) is required as a cofactor. Post-translationally, ubiquitinated. Phosphorylated at Thr-183 by STK11/LKB1 in complex with STE20-related adapter-alpha (STRADA) pseudo kinase and CAB39. Also phosphorylated at Thr-183 by CAMKK2; triggered by a rise in intracellular calcium ions, without detectable changes in the AMP/ATP ratio. CAMKK1 can also phosphorylate Thr-183, but at a much lower level. Dephosphorylated by protein phosphatase 2A and 2C (PP2A and PP2C). Phosphorylated by ULK1 and ULK2; leading to negatively regulate AMPK activity and suggesting the existence of a regulatory feedback loop between ULK1, ULK2 and AMPK. Dephosphorylated by PPM1A and PPM1B. In terms of processing, glycosylated; O-GlcNAcylated by OGT, promoting the AMP-activated protein kinase (AMPK) activity.

Its subcellular location is the cytoplasm. The protein resides in the nucleus. The enzyme catalyses L-seryl-[protein] + ATP = O-phospho-L-seryl-[protein] + ADP + H(+). The catalysed reaction is L-threonyl-[protein] + ATP = O-phospho-L-threonyl-[protein] + ADP + H(+). It catalyses the reaction L-seryl-[acetyl-CoA carboxylase] + ATP = O-phospho-L-seryl-[acetyl-CoA carboxylase] + ADP + H(+). It carries out the reaction L-seryl-[3-hydroxy-3-methylglutaryl-coenzyme A reductase] + ATP = O-phospho-L-seryl-[3-hydroxy-3-methylglutaryl-coenzyme A reductase] + ADP + H(+). The enzyme catalyses L-seryl-[tau protein] + ATP = O-phospho-L-seryl-[tau protein] + ADP + H(+). The catalysed reaction is L-threonyl-[tau protein] + ATP = O-phospho-L-threonyl-[tau protein] + ADP + H(+). Its activity is regulated as follows. Activated by phosphorylation on Thr-183. Binding of AMP to non-catalytic gamma subunit (PRKAG1, PRKAG2 or PRKAG3) results in allosteric activation, inducing phosphorylation on Thr-183. AMP-binding to gamma subunit also sustains activity by preventing dephosphorylation of Thr-183. ADP also stimulates Thr-183 phosphorylation, without stimulating already phosphorylated AMPK. ATP promotes dephosphorylation of Thr-183, rendering the enzyme inactive. Under physiological conditions AMPK mainly exists in its inactive form in complex with ATP, which is much more abundant than AMP. AMPK is activated by antihyperglycemic drug metformin, a drug prescribed to patients with type 2 diabetes: in vivo, metformin seems to mainly inhibit liver gluconeogenesis. However, metformin can be used to activate AMPK in muscle and other cells in culture or ex vivo. Selectively inhibited by compound C (6-[4-(2-Piperidin-1-yl-ethoxy)-phenyl)]-3-pyridin-4-yl-pyyrazolo[1,5-a] pyrimidine. Activated by resveratrol, a natural polyphenol present in red wine, and S17834, a synthetic polyphenol. Functionally, catalytic subunit of AMP-activated protein kinase (AMPK), an energy sensor protein kinase that plays a key role in regulating cellular energy metabolism. In response to reduction of intracellular ATP levels, AMPK activates energy-producing pathways and inhibits energy-consuming processes: inhibits protein, carbohydrate and lipid biosynthesis, as well as cell growth and proliferation. AMPK acts via direct phosphorylation of metabolic enzymes, and by longer-term effects via phosphorylation of transcription regulators. Regulates lipid synthesis by phosphorylating and inactivating lipid metabolic enzymes such as ACACA, ACACB, GYS1, HMGCR and LIPE; regulates fatty acid and cholesterol synthesis by phosphorylating acetyl-CoA carboxylase (ACACA and ACACB) and hormone-sensitive lipase (LIPE) enzymes, respectively. Promotes lipolysis of lipid droplets by mediating phosphorylation of isoform 1 of CHKA (CHKalpha2). Regulates insulin-signaling and glycolysis by phosphorylating IRS1, PFKFB2 and PFKFB3. AMPK stimulates glucose uptake in muscle by increasing the translocation of the glucose transporter SLC2A4/GLUT4 to the plasma membrane, possibly by mediating phosphorylation of TBC1D4/AS160. Regulates transcription and chromatin structure by phosphorylating transcription regulators involved in energy metabolism such as CRTC2/TORC2, FOXO3, histone H2B, HDAC5, MEF2C, MLXIPL/ChREBP, EP300, HNF4A, p53/TP53, SREBF1, SREBF2 and PPARGC1A. Acts as a key regulator of glucose homeostasis in liver by phosphorylating CRTC2/TORC2, leading to CRTC2/TORC2 sequestration in the cytoplasm. In response to stress, phosphorylates 'Ser-36' of histone H2B (H2BS36ph), leading to promote transcription. Acts as a key regulator of cell growth and proliferation by phosphorylating FNIP1, TSC2, RPTOR, WDR24 and ATG1/ULK1: in response to nutrient limitation, negatively regulates the mTORC1 complex by phosphorylating RPTOR component of the mTORC1 complex and by phosphorylating and activating TSC2. Also phosphorylates and inhibits GATOR2 subunit WDR24 in response to nutrient limitation, leading to suppress glucose-mediated mTORC1 activation. In response to energetic stress, phosphorylates FNIP1, inactivating the non-canonical mTORC1 signaling, thereby promoting nuclear translocation of TFEB and TFE3, and inducing transcription of lysosomal or autophagy genes. In response to nutrient limitation, promotes autophagy by phosphorylating and activating ATG1/ULK1. In that process, it also activates WDR45/WIPI4. Phosphorylates CASP6, thereby preventing its autoprocessing and subsequent activation. In response to nutrient limitation, phosphorylates transcription factor FOXO3 promoting FOXO3 mitochondrial import. Also acts as a regulator of cellular polarity by remodeling the actin cytoskeleton; probably by indirectly activating myosin. AMPK also acts as a regulator of circadian rhythm by mediating phosphorylation of CRY1, leading to destabilize it. May regulate the Wnt signaling pathway by phosphorylating CTNNB1, leading to stabilize it. Also has tau-protein kinase activity: in response to amyloid beta A4 protein (APP) exposure, activated by CAMKK2, leading to phosphorylation of MAPT/TAU; however the relevance of such data remains unclear in vivo. Also phosphorylates CFTR, EEF2K, KLC1, NOS3 and SLC12A1. Regulates hepatic lipogenesis. Activated via SIRT3, represses sterol regulatory element-binding protein (SREBP) transcriptional activities and ATP-consuming lipogenesis to restore cellular energy balance. Upon stress, regulates mitochondrial fragmentation through phosphorylation of MTFR1L. This chain is 5'-AMP-activated protein kinase catalytic subunit alpha-1, found in Homo sapiens (Human).